We begin with the raw amino-acid sequence, 397 residues long: Tryptophan synthase beta chain (397 aa).

Residue lysine 87 is modified to N6-(pyridoxal phosphate)lysine.

It belongs to the TrpB family. Tetramer of two alpha and two beta chains. Pyridoxal 5'-phosphate serves as cofactor.

The enzyme catalyses (1S,2R)-1-C-(indol-3-yl)glycerol 3-phosphate + L-serine = D-glyceraldehyde 3-phosphate + L-tryptophan + H2O. It participates in amino-acid biosynthesis; L-tryptophan biosynthesis; L-tryptophan from chorismate: step 5/5. In terms of biological role, the beta subunit is responsible for the synthesis of L-tryptophan from indole and L-serine. This chain is Tryptophan synthase beta chain, found in Shigella boydii serotype 18 (strain CDC 3083-94 / BS512).